The following is a 152-amino-acid chain: Putative pre-16S rRNA nuclease (152 aa).

This sequence belongs to the YqgF nuclease family.

The protein resides in the cytoplasm. Its function is as follows. Could be a nuclease involved in processing of the 5'-end of pre-16S rRNA. This chain is Putative pre-16S rRNA nuclease, found in Bifidobacterium longum (strain DJO10A).